The sequence spans 283 residues: Thymidylate synthase (283 aa).

Arginine 22 serves as a coordination point for dUMP. Cysteine 160 serves as the catalytic Nucleophile. DUMP contacts are provided by residues 180-183 (RSCD), asparagine 191, and 221-223 (HIY). Residue aspartate 183 participates in (6R)-5,10-methylene-5,6,7,8-tetrahydrofolate binding. Serine 282 is a (6R)-5,10-methylene-5,6,7,8-tetrahydrofolate binding site.

This sequence belongs to the thymidylate synthase family. Bacterial-type ThyA subfamily. As to quaternary structure, homodimer.

Its subcellular location is the cytoplasm. The catalysed reaction is dUMP + (6R)-5,10-methylene-5,6,7,8-tetrahydrofolate = 7,8-dihydrofolate + dTMP. It participates in pyrimidine metabolism; dTTP biosynthesis. In terms of biological role, catalyzes the reductive methylation of 2'-deoxyuridine-5'-monophosphate (dUMP) to 2'-deoxythymidine-5'-monophosphate (dTMP) while utilizing 5,10-methylenetetrahydrofolate (mTHF) as the methyl donor and reductant in the reaction, yielding dihydrofolate (DHF) as a by-product. This enzymatic reaction provides an intracellular de novo source of dTMP, an essential precursor for DNA biosynthesis. This is Thymidylate synthase from Tolumonas auensis (strain DSM 9187 / NBRC 110442 / TA 4).